Consider the following 440-residue polypeptide: tRNA(Ile)-lysidine synthase (440 aa).

An ATP-binding site is contributed by 19–24 (SGGLDS).

Belongs to the tRNA(Ile)-lysidine synthase family.

Its subcellular location is the cytoplasm. It carries out the reaction cytidine(34) in tRNA(Ile2) + L-lysine + ATP = lysidine(34) in tRNA(Ile2) + AMP + diphosphate + H(+). Functionally, ligates lysine onto the cytidine present at position 34 of the AUA codon-specific tRNA(Ile) that contains the anticodon CAU, in an ATP-dependent manner. Cytidine is converted to lysidine, thus changing the amino acid specificity of the tRNA from methionine to isoleucine. The protein is tRNA(Ile)-lysidine synthase of Buchnera aphidicola subsp. Acyrthosiphon pisum (strain APS) (Acyrthosiphon pisum symbiotic bacterium).